The following is a 442-amino-acid chain: Methylenetetrahydrofolate--tRNA-(uracil-5-)-methyltransferase TrmFO 1 (442 aa).

FAD is bound at residue 9 to 14; sequence GAGLAG.

The protein belongs to the MnmG family. TrmFO subfamily. FAD is required as a cofactor.

Its subcellular location is the cytoplasm. It catalyses the reaction uridine(54) in tRNA + (6R)-5,10-methylene-5,6,7,8-tetrahydrofolate + NADH + H(+) = 5-methyluridine(54) in tRNA + (6S)-5,6,7,8-tetrahydrofolate + NAD(+). The catalysed reaction is uridine(54) in tRNA + (6R)-5,10-methylene-5,6,7,8-tetrahydrofolate + NADPH + H(+) = 5-methyluridine(54) in tRNA + (6S)-5,6,7,8-tetrahydrofolate + NADP(+). In terms of biological role, catalyzes the folate-dependent formation of 5-methyl-uridine at position 54 (M-5-U54) in all tRNAs. The protein is Methylenetetrahydrofolate--tRNA-(uracil-5-)-methyltransferase TrmFO 1 of Mesoplasma florum (strain ATCC 33453 / NBRC 100688 / NCTC 11704 / L1) (Acholeplasma florum).